A 421-amino-acid polypeptide reads, in one-letter code: Dihydroorotase (421 aa).

Residues H59 and H61 each coordinate Zn(2+). Substrate-binding positions include 61–63 (HLR) and N93. Residues D150, H177, and H230 each coordinate Zn(2+). N276 is a binding site for substrate. D303 is a binding site for Zn(2+). D303 is an active-site residue. H307 lines the substrate pocket.

This sequence belongs to the metallo-dependent hydrolases superfamily. DHOase family. Class I DHOase subfamily. Zn(2+) is required as a cofactor.

It catalyses the reaction (S)-dihydroorotate + H2O = N-carbamoyl-L-aspartate + H(+). It participates in pyrimidine metabolism; UMP biosynthesis via de novo pathway; (S)-dihydroorotate from bicarbonate: step 3/3. Its function is as follows. Catalyzes the reversible cyclization of carbamoyl aspartate to dihydroorotate. The chain is Dihydroorotase from Desulfotalea psychrophila (strain LSv54 / DSM 12343).